The chain runs to 194 residues: Protein GrpE (194 aa).

The protein belongs to the GrpE family. In terms of assembly, homodimer.

It localises to the cytoplasm. Participates actively in the response to hyperosmotic and heat shock by preventing the aggregation of stress-denatured proteins, in association with DnaK and GrpE. It is the nucleotide exchange factor for DnaK and may function as a thermosensor. Unfolded proteins bind initially to DnaJ; upon interaction with the DnaJ-bound protein, DnaK hydrolyzes its bound ATP, resulting in the formation of a stable complex. GrpE releases ADP from DnaK; ATP binding to DnaK triggers the release of the substrate protein, thus completing the reaction cycle. Several rounds of ATP-dependent interactions between DnaJ, DnaK and GrpE are required for fully efficient folding. The polypeptide is Protein GrpE (Aliivibrio fischeri (strain ATCC 700601 / ES114) (Vibrio fischeri)).